A 121-amino-acid chain; its full sequence is MARIAGVDIPKNERVEIGLTRIFGIGRSLSNKILKETGVEPNKRVKDLTDDEIVKIRSEIEKNYKVEGELRKEISMNIKRLMDIGCYRGLRHMANLPVRGQRTRTNSRTRKGPRRKIMKKK.

A disordered region spans residues 99 to 121 (RGQRTRTNSRTRKGPRRKIMKKK). Basic residues predominate over residues 101–121 (QRTRTNSRTRKGPRRKIMKKK).

Belongs to the universal ribosomal protein uS13 family. Part of the 30S ribosomal subunit. Forms a loose heterodimer with protein S19. Forms two bridges to the 50S subunit in the 70S ribosome.

Located at the top of the head of the 30S subunit, it contacts several helices of the 16S rRNA. In the 70S ribosome it contacts the 23S rRNA (bridge B1a) and protein L5 of the 50S subunit (bridge B1b), connecting the 2 subunits; these bridges are implicated in subunit movement. Contacts the tRNAs in the A and P-sites. In Thermodesulfovibrio yellowstonii (strain ATCC 51303 / DSM 11347 / YP87), this protein is Small ribosomal subunit protein uS13.